A 260-amino-acid polypeptide reads, in one-letter code: Thiazole synthase (260 aa).

Residue Lys100 is the Schiff-base intermediate with DXP of the active site. Residues Gly162, Ala188 to Gly189, and Asn210 to Thr211 each bind 1-deoxy-D-xylulose 5-phosphate.

The protein belongs to the ThiG family. Homotetramer. Forms heterodimers with either ThiH or ThiS.

It localises to the cytoplasm. The enzyme catalyses [ThiS sulfur-carrier protein]-C-terminal-Gly-aminoethanethioate + 2-iminoacetate + 1-deoxy-D-xylulose 5-phosphate = [ThiS sulfur-carrier protein]-C-terminal Gly-Gly + 2-[(2R,5Z)-2-carboxy-4-methylthiazol-5(2H)-ylidene]ethyl phosphate + 2 H2O + H(+). Its pathway is cofactor biosynthesis; thiamine diphosphate biosynthesis. Catalyzes the rearrangement of 1-deoxy-D-xylulose 5-phosphate (DXP) to produce the thiazole phosphate moiety of thiamine. Sulfur is provided by the thiocarboxylate moiety of the carrier protein ThiS. In vitro, sulfur can be provided by H(2)S. This Wolinella succinogenes (strain ATCC 29543 / DSM 1740 / CCUG 13145 / JCM 31913 / LMG 7466 / NCTC 11488 / FDC 602W) (Vibrio succinogenes) protein is Thiazole synthase.